A 146-amino-acid chain; its full sequence is Ataxin-7-like protein 1 (146 aa).

Disordered stretches follow at residues 1–27 (MTSE…QEGT) and 125–146 (KRNA…QRQV). Polar residues predominate over residues 127–138 (NASISWSGAESR).

This is Ataxin-7-like protein 1 (Atxn7l1) from Mus musculus (Mouse).